The chain runs to 1072 residues: Guanylyl cyclase C (1072 aa).

An N-terminal signal peptide occupies residues 1 to 19 (MTSLLGLAVRLLLFQPALM). Residues 20–433 (VFWASQVRQN…VPGLGPQILM (414 aa)) are Extracellular-facing. Residues Asn-32, Asn-75, Asn-79, Asn-179, Asn-188, Asn-195, Asn-284, Asn-307, Asn-345, and Asn-402 are each glycosylated (N-linked (GlcNAc...) asparagine). A helical transmembrane segment spans residues 434–454 (IAVFTLTGILVVLLLIALLVL). Topologically, residues 455-1072 (RKYRRDHALR…NNSDHDSTYF (618 aa)) are cytoplasmic. A Protein kinase domain is found at 489-748 (LKIDDDRRRD…KIESTLAKIF (260 aa)). The region spanning 823–953 (TIYFSDIVGF…DTVNTASRME (131 aa)) is the Guanylate cyclase domain.

This sequence belongs to the adenylyl cyclase class-4/guanylyl cyclase family. In terms of assembly, homotrimer. Interacts via its C-terminal region with NHERF4. Interacts with the lectin chaperone VIP36. Glycosylation at Asn-75 and/or Asn-79 is required for interaction with VIP36 while glycosylation at Asn-345 and Asn-402 modulates ligand-mediated GC-C activation.

Its subcellular location is the cell membrane. The protein localises to the endoplasmic reticulum membrane. It carries out the reaction GTP = 3',5'-cyclic GMP + diphosphate. Its function is as follows. Guanylyl cyclase that catalyzes synthesis of cyclic GMP (cGMP) from GTP. The chain is Guanylyl cyclase C (Gucy2c) from Mus musculus (Mouse).